The primary structure comprises 500 residues: 5-taurinomethyluridine-[tRNA] synthase subunit GTPB3, mitochondrial (500 aa).

A mitochondrion-targeting transit peptide spans 1–73 (MHFISCCLRR…RRLTRSLPAP (73 aa)). 5,10-methylenetetrahydrofolate is bound by residues Arg53, Glu111, and Lys151. The 175-residue stretch at 248-422 (GVHVVIAGST…LLTLLHNTLK (175 aa)) folds into the TrmE-type G domain. GTP-binding positions include 255 to 262 (GSTNAGKS), 281 to 285 (GTTRD), 302 to 305 (DTAG), and 373 to 376 (NESD). K(+) is bound at residue Asn258. Mg(2+) contacts are provided by Ser262 and Thr283. Lys500 contributes to the 5,10-methylenetetrahydrofolate binding site.

It belongs to the TRAFAC class TrmE-Era-EngA-EngB-Septin-like GTPase superfamily. TrmE GTPase family. K(+) is required as a cofactor.

It is found in the mitochondrion. It catalyses the reaction GTP + H2O = GDP + phosphate + H(+). In terms of biological role, GTPase component of the GTPBP3-MTO1 complex that catalyzes the 5-taurinomethyluridine (taum(5)U) modification at the 34th wobble position (U34) of mitochondrial tRNAs (mt-tRNAs), which plays a role in mt-tRNA decoding and mitochondrial translation. Taum(5)U formation on mammalian mt-tRNA requires the presence of both GTPBP3-mediated GTPase activity and MTO1 catalytic activity. This chain is 5-taurinomethyluridine-[tRNA] synthase subunit GTPB3, mitochondrial (gtpbp3), found in Danio rerio (Zebrafish).